A 572-amino-acid polypeptide reads, in one-letter code: Sialate:O-sulfotransferase 2 (572 aa).

Topologically, residues 1–18 (MARSLLKIHRYFRRKPVR) are cytoplasmic. A helical; Signal-anchor for type II membrane protein transmembrane segment spans residues 19–39 (FFSFILLYLTAGSLVFLHSGF). At 40–572 (SSDSSTAGIA…SGVPDEYRPR (533 aa)) the chain is on the extracellular side. 2 WSC domains span residues 134–226 (RAKY…YRLE) and 237–331 (SAIF…YQTQ). Asparagine 196, asparagine 249, asparagine 262, and asparagine 561 each carry an N-linked (GlcNAc...) asparagine glycan.

It belongs to the WSCD family.

Its subcellular location is the golgi apparatus membrane. Sialate:O-sulfotransferase which catalyzes 8-O-sulfation at the Sia-glycan level using 3'-phosphoadenosine 5'-phosphosulfate (PAPS) as a donor, forming 8-O-sulfated Sia (Sia8S)-glycans. The chain is Sialate:O-sulfotransferase 2 (wscd2) from Danio rerio (Zebrafish).